Consider the following 61-residue polypeptide: Small ribosomal subunit protein uS14 (61 aa).

Residues cysteine 24, cysteine 27, cysteine 40, and cysteine 43 each contribute to the Zn(2+) site.

It belongs to the universal ribosomal protein uS14 family. Zinc-binding uS14 subfamily. Part of the 30S ribosomal subunit. Contacts proteins S3 and S10. Requires Zn(2+) as cofactor.

Its function is as follows. Binds 16S rRNA, required for the assembly of 30S particles and may also be responsible for determining the conformation of the 16S rRNA at the A site. This Clostridium botulinum (strain Alaska E43 / Type E3) protein is Small ribosomal subunit protein uS14.